Here is a 159-residue protein sequence, read N- to C-terminus: Ribosomal RNA large subunit methyltransferase H (159 aa).

S-adenosyl-L-methionine-binding positions include Leu76, Gly108, and 127 to 132; that span reads FSKMTF.

It belongs to the RNA methyltransferase RlmH family. Homodimer.

It is found in the cytoplasm. It carries out the reaction pseudouridine(1915) in 23S rRNA + S-adenosyl-L-methionine = N(3)-methylpseudouridine(1915) in 23S rRNA + S-adenosyl-L-homocysteine + H(+). Specifically methylates the pseudouridine at position 1915 (m3Psi1915) in 23S rRNA. This Clostridium novyi (strain NT) protein is Ribosomal RNA large subunit methyltransferase H.